A 301-amino-acid chain; its full sequence is 4-hydroxy-tetrahydrodipicolinate synthase (301 aa).

T53 is a pyruvate binding site. Catalysis depends on Y142, which acts as the Proton donor/acceptor. K170 acts as the Schiff-base intermediate with substrate in catalysis. Residue V212 participates in pyruvate binding.

The protein belongs to the DapA family. Homotetramer; dimer of dimers.

The protein localises to the cytoplasm. The enzyme catalyses L-aspartate 4-semialdehyde + pyruvate = (2S,4S)-4-hydroxy-2,3,4,5-tetrahydrodipicolinate + H2O + H(+). It functions in the pathway amino-acid biosynthesis; L-lysine biosynthesis via DAP pathway; (S)-tetrahydrodipicolinate from L-aspartate: step 3/4. Catalyzes the condensation of (S)-aspartate-beta-semialdehyde [(S)-ASA] and pyruvate to 4-hydroxy-tetrahydrodipicolinate (HTPA). In Synechocystis sp. (strain ATCC 27184 / PCC 6803 / Kazusa), this protein is 4-hydroxy-tetrahydrodipicolinate synthase.